A 72-amino-acid chain; its full sequence is ATP synthase subunit c (72 aa).

The next 2 helical transmembrane spans lie at 1–21 and 49–69; these read MSLG…GAGI and FIGV…AFIV.

Belongs to the ATPase C chain family. F-type ATPases have 2 components, F(1) - the catalytic core - and F(0) - the membrane proton channel. F(1) has five subunits: alpha(3), beta(3), gamma(1), delta(1), epsilon(1). F(0) has three main subunits: a(1), b(2) and c(10-14). The alpha and beta chains form an alternating ring which encloses part of the gamma chain. F(1) is attached to F(0) by a central stalk formed by the gamma and epsilon chains, while a peripheral stalk is formed by the delta and b chains.

It localises to the cell membrane. Functionally, f(1)F(0) ATP synthase produces ATP from ADP in the presence of a proton or sodium gradient. F-type ATPases consist of two structural domains, F(1) containing the extramembraneous catalytic core and F(0) containing the membrane proton channel, linked together by a central stalk and a peripheral stalk. During catalysis, ATP synthesis in the catalytic domain of F(1) is coupled via a rotary mechanism of the central stalk subunits to proton translocation. In terms of biological role, key component of the F(0) channel; it plays a direct role in translocation across the membrane. A homomeric c-ring of between 10-14 subunits forms the central stalk rotor element with the F(1) delta and epsilon subunits. This Bacillus cytotoxicus (strain DSM 22905 / CIP 110041 / 391-98 / NVH 391-98) protein is ATP synthase subunit c.